The primary structure comprises 704 residues: Polyribonucleotide nucleotidyltransferase 4 (704 aa).

Residues aspartate 483 and aspartate 489 each contribute to the Mg(2+) site. The KH domain maps to 550-609; sequence PRVLKMKIHPDKIRDVIGSGGKTINRIIDETGVKIDIDNDGTIFIAAESQEAVEKAIIII. Positions 619-687 constitute an S1 motif domain; that stretch reads GQNYTGKVIK…QQGKINLSRK (69 aa).

This sequence belongs to the polyribonucleotide nucleotidyltransferase family. Requires Mg(2+) as cofactor.

It is found in the cytoplasm. It carries out the reaction RNA(n+1) + phosphate = RNA(n) + a ribonucleoside 5'-diphosphate. Involved in mRNA degradation. Catalyzes the phosphorolysis of single-stranded polyribonucleotides processively in the 3'- to 5'-direction. This chain is Polyribonucleotide nucleotidyltransferase 4, found in Alkaliphilus metalliredigens (strain QYMF).